Consider the following 318-residue polypeptide: Energy-coupling factor transporter ATP-binding protein EcfA2 (318 aa).

The ABC transporter domain occupies 22-271; it reads LRAQGLKCVF…PEIMQTTSIA (250 aa). 59 to 66 provides a ligand contact to ATP; the sequence is GNSGSGKS.

The protein belongs to the ABC transporter superfamily. Energy-coupling factor EcfA family. Forms a stable energy-coupling factor (ECF) transporter complex composed of 2 membrane-embedded substrate-binding proteins (S component), 2 ATP-binding proteins (A component) and 2 transmembrane proteins (T component).

The protein resides in the cell membrane. Its function is as follows. ATP-binding (A) component of a common energy-coupling factor (ECF) ABC-transporter complex. Unlike classic ABC transporters this ECF transporter provides the energy necessary to transport a number of different substrates. This is Energy-coupling factor transporter ATP-binding protein EcfA2 from Mycoplasmoides gallisepticum (strain R(low / passage 15 / clone 2)) (Mycoplasma gallisepticum).